The sequence spans 776 residues: Ion-translocating oxidoreductase complex subunit C (776 aa).

4Fe-4S ferredoxin-type domains follow at residues 368-397 (MGAP…QQLY) and 407-436 (KATA…VQYF). C377, C380, C383, C387, C416, C419, C422, and C426 together coordinate [4Fe-4S] cluster. Basic and acidic residues-rich tracts occupy residues 534-543 (ARARQAEKVQ), 597-611 (ADEK…RKAA), 633-647 (ADEK…RKAA), 669-683 (ADEK…RKAA), and 705-719 (ADEK…RKAT). The segment at 534 to 754 (ARARQAEKVQ…ENEAEDPRKA (221 aa)) is disordered. Residues 721–743 (EAAIARAKARKAAQAGERAQAAN) are compositionally biased toward low complexity.

It belongs to the 4Fe4S bacterial-type ferredoxin family. RnfC subfamily. The complex is composed of six subunits: RnfA, RnfB, RnfC, RnfD, RnfE and RnfG. [4Fe-4S] cluster is required as a cofactor.

The protein localises to the cell inner membrane. In terms of biological role, part of a membrane-bound complex that couples electron transfer with translocation of ions across the membrane. The chain is Ion-translocating oxidoreductase complex subunit C from Cronobacter sakazakii (strain ATCC BAA-894) (Enterobacter sakazakii).